The following is a 632-amino-acid chain: Palmitoyltransferase ZDHHC17 (632 aa).

Topologically, residues 1-304 are cytoplasmic; the sequence is MQREEGFNTK…LKADKEFRQK (304 aa). The interval 11-305 is necessary and sufficient for interaction with DNAJC5 and SNAP25; it reads MADGPDEYDT…KADKEFRQKV (295 aa). ANK repeat units lie at residues 51-86, 89-118, 123-152, 156-185, 189-219, 224-253, and 257-286; these read THID…VRQP, ENVT…IVDQ, LNST…DPSL, EGCS…DVDM, NGMT…SVNL, HKNT…NVDA, and KGES…AKGY. A run of 2 helical transmembrane segments spans residues 305-325 and 326-346; these read VMLG…DLNI and DSWL…QFLS. At 347–357 the chain is on the cytoplasmic side; sequence KSFFDHSMHSA. The helical transmembrane segment at 358 to 378 threads the bilayer; sequence LPLGIYLATKFWMYVTWFFWF. Residues 379–381 are Lumenal-facing; the sequence is WND. A helical membrane pass occupies residues 382-402; sequence LNFLFIHLPFLANSVALFYNF. Over 403–480 the chain is Cytoplasmic; sequence GKSWKSDPGI…GNCVGAGNHR (78 aa). The region spanning 437–487 is the DHHC domain; that stretch reads IFCSTCLIRKPVRSKHCGVCNRCIAKFDHHCPWVGNCVGAGNHRYFMGYLF. Cys-467 functions as the S-palmitoyl cysteine intermediate in the catalytic mechanism. A helical transmembrane segment spans residues 481–501; sequence YFMGYLFFLLFMICWMIYGCI. The Lumenal portion of the chain corresponds to 502–529; sequence SYWGLHCETTYTKDGFWTYITQIATCSP. A helical transmembrane segment spans residues 530–550; it reads WMFWMFLNSVFHFMWVAVLLM. Topologically, residues 551-632 are cytoplasmic; it reads CQMYQISCLG…QISGSGYQLV (82 aa).

It belongs to the DHHC palmitoyltransferase family. AKR/ZDHHC17 subfamily. As to quaternary structure, interacts (via ANK repeats) with numerous proteins (via the consensus sequence motif [VIAP]-[VIT]-x-x-Q-P). Interacts (via ANK repeats) with CLIP3. Interacts (via ANK repeats) with HTT; this interaction is inversely correlated to the length of the polyglutamine tract added to the huntingtin protein in Huntington disease. Interacts (via ANK repeats) with DNAJC5 (via C-terminus). Interacts (via ANK repeats) with MAP6. Interacts (via ANK repeats) with SNAP23. Interacts (via ANK repeats) with SNAP25. Interacts (via ANK repeats) with EVL. Interacts with SPRED1 and SPRED3. Interacts with GPM6A and OPTN. May interact (via ANK repeats) with SPRED2. May interact with NTRK1; may regulate its localization and function. Autopalmitoylated. Autopalmitoylation has a regulatory role in ZDHHC17-mediated Mg(2+) transport. As to expression, expressed in all brain regions. Expression is highest in the cortex, cerebellum, occipital lobe and caudate and lowest in the spinal cord. Expression is also seen in testis, pancreas, heart and kidney.

The protein resides in the golgi apparatus membrane. Its subcellular location is the cytoplasmic vesicle membrane. The protein localises to the presynaptic cell membrane. The enzyme catalyses L-cysteinyl-[protein] + hexadecanoyl-CoA = S-hexadecanoyl-L-cysteinyl-[protein] + CoA. It carries out the reaction L-cysteinyl-[protein] + tetradecanoyl-CoA = S-tetradecanoyl-L-cysteinyl-[protein] + CoA. It catalyses the reaction L-cysteinyl-[protein] + octadecanoyl-CoA = S-octadecanoyl-L-cysteinyl-[protein] + CoA. Palmitoyltransferase that catalyzes the addition of palmitate onto various protein substrates and is involved in a variety of cellular processes. Has no stringent fatty acid selectivity and in addition to palmitate can also transfer onto target proteins myristate from tetradecanoyl-CoA and stearate from octadecanoyl-CoA. Palmitoyltransferase specific for a subset of neuronal proteins, including SNAP25, DLG4/PSD95, GAD2, SYT1 and HTT. Also palmitoylates neuronal protein GPM6A as well as SPRED1 and SPRED3. Could also play a role in axonogenesis through the regulation of NTRK1 and the downstream ERK1/ERK2 signaling cascade. May be involved in the sorting or targeting of critical proteins involved in the initiating events of endocytosis at the plasma membrane. May play a role in Mg(2+) transport. Could also palmitoylate DNAJC5 and regulate its localization to the Golgi membrane. Palmitoylates CASP6, thereby preventing its dimerization and subsequent activation. The protein is Palmitoyltransferase ZDHHC17 of Homo sapiens (Human).